Reading from the N-terminus, the 273-residue chain is Dermonecrotic toxin LhSicTox-alphaIA2avi (273 aa).

Residue His-5 is part of the active site. Residues Glu-25 and Asp-27 each contribute to the Mg(2+) site. The Nucleophile role is filled by His-41. Intrachain disulfides connect Cys-45/Cys-51 and Cys-47/Cys-190. Residue Asp-85 coordinates Mg(2+).

Belongs to the arthropod phospholipase D family. Class II subfamily. Mg(2+) is required as a cofactor. In terms of tissue distribution, expressed by the venom gland.

Its subcellular location is the secreted. The catalysed reaction is an N-(acyl)-sphingosylphosphocholine = an N-(acyl)-sphingosyl-1,3-cyclic phosphate + choline. It carries out the reaction an N-(acyl)-sphingosylphosphoethanolamine = an N-(acyl)-sphingosyl-1,3-cyclic phosphate + ethanolamine. It catalyses the reaction a 1-acyl-sn-glycero-3-phosphocholine = a 1-acyl-sn-glycero-2,3-cyclic phosphate + choline. The enzyme catalyses a 1-acyl-sn-glycero-3-phosphoethanolamine = a 1-acyl-sn-glycero-2,3-cyclic phosphate + ethanolamine. In terms of biological role, dermonecrotic toxins cleave the phosphodiester linkage between the phosphate and headgroup of certain phospholipids (sphingolipid and lysolipid substrates), forming an alcohol (often choline) and a cyclic phosphate. This toxin acts on sphingomyelin (SM). It may also act on ceramide phosphoethanolamine (CPE), lysophosphatidylcholine (LPC) and lysophosphatidylethanolamine (LPE), but not on lysophosphatidylserine (LPS), and lysophosphatidylglycerol (LPG). It acts by transphosphatidylation, releasing exclusively cyclic phosphate products as second products. Induces dermonecrosis, hemolysis, increased vascular permeability, edema, inflammatory response, and platelet aggregation. This Loxosceles hirsuta (Recluse spider) protein is Dermonecrotic toxin LhSicTox-alphaIA2avi.